A 292-amino-acid polypeptide reads, in one-letter code: Acidic endochitinase (292 aa).

The first 25 residues, methionine 1–alanine 25, serve as a signal peptide directing secretion. In terms of domain architecture, GH18 spans alanine 26–glycine 292. 2 cysteine pairs are disulfide-bonded: cysteine 45–cysteine 92 and cysteine 75–cysteine 82. Glutamate 152 functions as the Proton donor in the catalytic mechanism. A disulfide bridge links cysteine 180 with cysteine 209.

This sequence belongs to the glycosyl hydrolase 18 family. Chitinase class II subfamily.

The protein localises to the secreted. It is found in the extracellular space. It carries out the reaction Random endo-hydrolysis of N-acetyl-beta-D-glucosaminide (1-&gt;4)-beta-linkages in chitin and chitodextrins.. Its function is as follows. This protein functions as a defense against chitin containing fungal pathogens. The chain is Acidic endochitinase from Cucumis sativus (Cucumber).